Consider the following 655-residue polypeptide: Potassium voltage-gated channel subfamily A member 4 (655 aa).

Topologically, residues 1 to 306 (MEVAMVSAES…LLFEYPESSS (306 aa)) are cytoplasmic. Positions 24–153 (QARARERERL…SEEDHGDGCS (130 aa)) are disordered. The segment covering 36 to 50 (SRAAAAAAVAAATAA) has biased composition (low complexity). A compositionally biased stretch (basic and acidic residues) spans 81 to 90 (GSREEEATRT). A compositionally biased stretch (basic residues) spans 91–100 (EKKKKLHHRQ). S123 is modified (phosphoserine). Residues 123–138 (SEEEEDEEEEEEEEEE) show a composition bias toward acidic residues. Residues 139–150 (GRFYYSEEDHGD) show a composition bias toward basic and acidic residues. The chain crosses the membrane as a helical span at residues 307 to 328 (PARGIAIVSVLVILISIVIFCL). Residues 329–372 (ETLPEFRDDRDLIMALSAGGHSRLLNDTSAPHLENSGHTIFNDP) are Extracellular-facing. N-linked (GlcNAc...) asparagine glycosylation is present at N354. A helical transmembrane segment spans residues 373-394 (FFIVETVCIVWFSFEFVVRCFA). The Cytoplasmic portion of the chain corresponds to 395-405 (CPSQALFFKNI). The chain crosses the membrane as a helical span at residues 406–426 (MNIIDIVSILPYFITLGTDLA). Residues 427 to 441 (QQQGGGNGQQQQAMS) lie on the Extracellular side of the membrane. Residues 442 to 462 (FAILRIIRLVRVFRIFKLSRH) traverse the membrane as a helical; Voltage-sensor segment. Residues 463-477 (SKGLQILGHTLRASM) are Cytoplasmic-facing. An S4-S5 linker region spans residues 464–477 (KGLQILGHTLRASM). A helical transmembrane segment spans residues 478-499 (RELGLLIFFLFIGVILFSSAVY). Residues 500–513 (FAEADEPTTHFQSI) are Extracellular-facing. Positions 514–525 (PDAFWWAVVTMT) form an intramembrane region, helical. Positions 526 to 531 (TVGYGD) match the Selectivity filter motif. Residues 526–533 (TVGYGDMK) lie within the membrane without spanning it. At 534 to 540 (PITVGGK) the chain is on the extracellular side. Residues 541–569 (IVGSLCAIAGVLTIALPVPVIVSNFNYFY) form a helical membrane-spanning segment. The Cytoplasmic segment spans residues 570–655 (HRETENEEQT…SNAKAVETDV (86 aa)). S601 carries the phosphoserine; by PKA modification. Residues 631-642 (CQGKGDDSETDK) show a composition bias toward basic and acidic residues. Residues 631-655 (CQGKGDDSETDKNNCSNAKAVETDV) form a disordered region. The PDZ-binding signature appears at 653-655 (TDV).

It belongs to the potassium channel family. A (Shaker) (TC 1.A.1.2) subfamily. Kv1.4/KCNA4 sub-subfamily. Homotetramer and heterotetramer of potassium channel proteins. Interacts with KCNAB1 and KCNAB2. Interacts with DLG1, DLG2 and DLG4 via their PDZ domains. Interacts with SIGMAR1. Part of a complex containing KCNA1, KCNAB1 and LGI1. Detected in a complex with KCNA1. Interacts with KCNA2. Interacts (via cytoplasmic N-terminal domain) with KCNRG. In terms of processing, N-glycosylated. As to expression, detected in brain (at protein level). Heart and brain.

The protein resides in the cell membrane. It localises to the cell projection. The protein localises to the axon. The enzyme catalyses K(+)(in) = K(+)(out). Voltage-gated potassium channel that mediates transmembrane potassium transport in excitable membranes. Forms tetrameric potassium-selective channels through which potassium ions pass in accordance with their electrochemical gradient. The channel alternates between opened and closed conformations in response to the voltage difference across the membrane. Can form functional homotetrameric channels and heterotetrameric channels that contain variable proportions of KCNA1, KCNA2, KCNA4, KCNA5, and possibly other family members as well; channel properties depend on the type of alpha subunits that are part of the channel. Channel properties are modulated by cytoplasmic beta subunits that regulate the subcellular location of the alpha subunits and promote rapid inactivation. In vivo, membranes probably contain a mixture of heteromeric potassium channel complexes, making it difficult to assign currents observed in intact tissues to any particular potassium channel family member. Homotetrameric KCNA4 forms a potassium channel that opens in response to membrane depolarization, followed by rapid spontaneous channel closure. Likewise, a heterotetrameric channel formed by KCNA1 and KCNA4 shows rapid inactivation. This chain is Potassium voltage-gated channel subfamily A member 4 (Kcna4), found in Rattus norvegicus (Rat).